We begin with the raw amino-acid sequence, 208 residues long: Large ribosomal subunit protein bL17 (208 aa).

The interval 122-208 (TEKKKKKPAK…ASEEAPPKTE (87 aa)) is disordered. The segment covering 151 to 179 (ADTPAPAAEESAPAKAAEPEAEAAAPEAE) has biased composition (low complexity).

The protein belongs to the bacterial ribosomal protein bL17 family. Part of the 50S ribosomal subunit. Contacts protein L32.

This is Large ribosomal subunit protein bL17 from Desulfosudis oleivorans (strain DSM 6200 / JCM 39069 / Hxd3) (Desulfococcus oleovorans).